The primary structure comprises 227 residues: Ribosomal RNA large subunit methyltransferase E (227 aa).

The S-adenosyl-L-methionine site is built by glycine 78, tryptophan 80, aspartate 103, aspartate 119, and aspartate 143. The active-site Proton acceptor is lysine 183.

This sequence belongs to the class I-like SAM-binding methyltransferase superfamily. RNA methyltransferase RlmE family.

It localises to the cytoplasm. It catalyses the reaction uridine(2552) in 23S rRNA + S-adenosyl-L-methionine = 2'-O-methyluridine(2552) in 23S rRNA + S-adenosyl-L-homocysteine + H(+). Specifically methylates the uridine in position 2552 of 23S rRNA at the 2'-O position of the ribose in the fully assembled 50S ribosomal subunit. This is Ribosomal RNA large subunit methyltransferase E from Rickettsia africae (strain ESF-5).